The primary structure comprises 483 residues: Serine/threonine-protein phosphatase 2A regulatory subunit phr2AB (483 aa).

2 WD repeats span residues 22–61 (SDAN…QSSK) and 88–129 (EIEE…IKQV). The disordered stretch occupies residues 132-152 (SATTTGPSYNGSLASNNTRSP). WD repeat units lie at residues 206 to 244 (AHAY…ECFN), 255 to 295 (DLTE…LCDN), 314 to 352 (EIIS…KPVK), and 369 to 410 (ENDC…DVCL). Residues 421 to 443 (TKTLTTKMKLRSSKKEPKKPEDI) form a disordered region. A compositionally biased stretch (basic and acidic residues) spans 433 to 443 (SKKEPKKPEDI). A WD 7 repeat occupies 449-483 (EYTKKTLHCAWHPKDNLIAVGAANTVYLYAATENK).

This sequence belongs to the phosphatase 2A regulatory subunit B family. As to quaternary structure, PP2A consists of a trimeric holoenzyme, composed of a 37 kDa catalytic subunit (C subunit) and a 65 kDa constant regulatory subunit (A subunit), that associates with a variety of regulatory subunits (B subunit) such as phr2AB (B55) and psrA (B56 homolog). The trimer may partially dissociates into a core 'AC' dimer equally active compared to the trimer.

It is found in the cytoplasm. The protein resides in the cytosol. The protein localises to the cytoskeleton. It localises to the microtubule organizing center. Its subcellular location is the centrosome. In terms of biological role, the B regulatory subunit might modulate substrate selectivity and catalytic activity, and might also direct the localization of the catalytic enzyme to a particular subcellular compartment. In Dictyostelium discoideum (Social amoeba), this protein is Serine/threonine-protein phosphatase 2A regulatory subunit phr2AB (phr2aB).